The following is a 92-amino-acid chain: MGRSLKKGPFIADSLLKKVEKQNTDNDKSVIKTWSRASTILPLMIGHTIAVHNGKTHIPVFITEQMIGHKLGEFAPTRTYRGHIRDKKGAKS.

Belongs to the universal ribosomal protein uS19 family.

Its function is as follows. Protein S19 forms a complex with S13 that binds strongly to the 16S ribosomal RNA. This is Small ribosomal subunit protein uS19 from Prochlorococcus marinus (strain MIT 9312).